Here is a 350-residue protein sequence, read N- to C-terminus: Protein Wnt-8b (350 aa).

A signal peptide spans 1–21 (MFLMKPVCVLLVTCVLHRSHA). Cysteine 53 and cysteine 64 are oxidised to a cystine. Asparagine 102 carries N-linked (GlcNAc...) asparagine glycosylation. Cystine bridges form between cysteine 103-cysteine 111, cysteine 113-cysteine 131, cysteine 179-cysteine 193, cysteine 181-cysteine 188, cysteine 255-cysteine 293, cysteine 271-cysteine 286, cysteine 290-cysteine 332, cysteine 308-cysteine 323, cysteine 310-cysteine 320, and cysteine 315-cysteine 316. The O-palmitoleoyl serine moiety is linked to residue serine 185. An N-linked (GlcNAc...) asparagine glycan is attached at asparagine 258.

Belongs to the Wnt family. Palmitoleoylation is required for efficient binding to frizzled receptors. Depalmitoleoylation leads to Wnt signaling pathway inhibition. In terms of processing, proteolytic processing by TIKI1 and TIKI2 promotes oxidation and formation of large disulfide-bond oligomers, leading to inactivation of WNT8B.

It is found in the secreted. The protein localises to the extracellular space. It localises to the extracellular matrix. Its function is as follows. Ligand for members of the frizzled family of seven transmembrane receptors. May play an important role in the development and differentiation of certain forebrain structures, notably the hippocampus. The sequence is that of Protein Wnt-8b (Wnt8b) from Mus musculus (Mouse).